The sequence spans 1096 residues: Eukaryotic translation initiation factor 3 subunit A (1096 aa).

A PCI domain is found at 323-502 (QATRVLLATL…GSIHFGAADA (180 aa)). Coiled coils occupy residues 591–643 (SERQ…IDRK), 677–761 (SVLR…RMQK), and 811–839 (KEGA…ERRA). Over residues 808–852 (ELPKEGAEERMASAREVAEQTRRDEQEKERRAVRESQRPSKREIV) the composition is skewed to basic and acidic residues. Residues 808-1096 (ELPKEGAEER…ADDDRNWRQK (289 aa)) form a disordered region. Polar residues predominate over residues 865–875 (AQPTQPRTISS). Basic and acidic residues-rich tracts occupy residues 878–890 (FGER…RYRE), 933–942 (SNREQARGEA), and 955–973 (QRDR…KRGE). Over residues 1008 to 1023 (DSSQRTSAATPTTQPW) the composition is skewed to polar residues. Residues 1085–1096 (GAADDDRNWRQK) are compositionally biased toward basic and acidic residues.

Belongs to the eIF-3 subunit A family. In terms of assembly, component of the eukaryotic translation initiation factor 3 (eIF-3) complex.

The protein localises to the cytoplasm. Functionally, RNA-binding component of the eukaryotic translation initiation factor 3 (eIF-3) complex, which is involved in protein synthesis of a specialized repertoire of mRNAs and, together with other initiation factors, stimulates binding of mRNA and methionyl-tRNAi to the 40S ribosome. The eIF-3 complex specifically targets and initiates translation of a subset of mRNAs involved in cell proliferation. The chain is Eukaryotic translation initiation factor 3 subunit A from Brugia malayi (Filarial nematode worm).